The primary structure comprises 211 residues: Small ribosomal subunit protein uS5 (211 aa).

The S5 DRBM domain occupies 50–113 (LEDEVLDINM…DNAKINITRI (64 aa)).

It belongs to the universal ribosomal protein uS5 family. In terms of assembly, part of the 30S ribosomal subunit. Contacts protein S4.

Its function is as follows. With S4 and S12 plays an important role in translational accuracy. The polypeptide is Small ribosomal subunit protein uS5 (Methanococcoides burtonii (strain DSM 6242 / NBRC 107633 / OCM 468 / ACE-M)).